A 148-amino-acid polypeptide reads, in one-letter code: 3-dehydroquinate dehydratase (148 aa).

Y23 serves as the catalytic Proton acceptor. The substrate site is built by N75, H81, and D88. The active-site Proton donor is the H101. Residues 102-103 (IS) and R112 contribute to the substrate site.

Belongs to the type-II 3-dehydroquinase family. Homododecamer.

It carries out the reaction 3-dehydroquinate = 3-dehydroshikimate + H2O. The protein operates within metabolic intermediate biosynthesis; chorismate biosynthesis; chorismate from D-erythrose 4-phosphate and phosphoenolpyruvate: step 3/7. Its function is as follows. Catalyzes a trans-dehydration via an enolate intermediate. This is 3-dehydroquinate dehydratase from Methylococcus capsulatus (strain ATCC 33009 / NCIMB 11132 / Bath).